The sequence spans 503 residues: ATP-dependent RNA helicase dbp3 (503 aa).

Basic and acidic residues predominate over residues 1-25 (MAKRVQHEGGDYRPQKRSKNERNGE). Residues 1-35 (MAKRVQHEGGDYRPQKRSKNERNGEGSKVSPSAEA) are disordered. The short motif at 104–112 (SFSSPTPIQ) is the Q motif element. One can recognise a Helicase ATP-binding domain in the interval 116 to 292 (WPLLFAGRDV…ATFMTSAVTV (177 aa)). 129 to 136 (AETGSGKT) is an ATP binding site. The DEAD box signature appears at 239–242 (DEAD). In terms of domain architecture, Helicase C-terminal spans 307–472 (RIKQVVEVVK…DVPDALLKFG (166 aa)).

Belongs to the DEAD box helicase family. DDX5/DBP2 subfamily.

It localises to the nucleus. Its subcellular location is the nucleolus. It carries out the reaction ATP + H2O = ADP + phosphate + H(+). ATP-dependent RNA helicase required for 60S ribosomal subunit synthesis. Involved in efficient pre-rRNA processing, predominantly at site A3, which is necessary for the normal formation of 25S and 5.8S rRNAs. The polypeptide is ATP-dependent RNA helicase dbp3 (dbp3) (Neosartorya fischeri (strain ATCC 1020 / DSM 3700 / CBS 544.65 / FGSC A1164 / JCM 1740 / NRRL 181 / WB 181) (Aspergillus fischerianus)).